A 46-amino-acid chain; its full sequence is DENENLYGPNENKAKAKDLTAGASYLTKEAGCTKLQAGCTMYQAYN.

The protein resides in the secreted. The protein localises to the nematocyst. It is found in the target cell membrane. This toxin is a potent hemolysin devoid of enzymatic activity. Its hemolytic activity is inhibited by sphingomyelin but not by cholesterol. In erythrocyte membranes, it causes numerous cell membrane ruptures. It also exerces cytotoxicity to different cell lines. It exerces a positive inotropic effect. Also causes hemorrhage and necrosis by dilation of the blood vessels in the skin, and vascular leakage of fluids and rupture of alveolar walls of the lungs. Is a potent ichtyotoxin. May act as a pore-forming toxin. The sequence is that of Toxin Up-1 from Urticina piscivora (Fish-eating sea anemone).